A 156-amino-acid polypeptide reads, in one-letter code: Small ribosomal subunit protein uS7 (156 aa).

The protein belongs to the universal ribosomal protein uS7 family. As to quaternary structure, part of the 30S ribosomal subunit. Contacts proteins S9 and S11.

Its function is as follows. One of the primary rRNA binding proteins, it binds directly to 16S rRNA where it nucleates assembly of the head domain of the 30S subunit. Is located at the subunit interface close to the decoding center, probably blocks exit of the E-site tRNA. The sequence is that of Small ribosomal subunit protein uS7 from Anaeromyxobacter sp. (strain Fw109-5).